A 529-amino-acid polypeptide reads, in one-letter code: Probable anion transporter 1, chloroplastic (529 aa).

The transit peptide at 1–55 (MLYLLPLSVSCRVPGSPPAPRSRRFLDPGGGRGVGDGLGGVRVFRRRALRGTDVR) directs the protein to the chloroplast. Disordered stretches follow at residues 13-39 (VPGS…DGLG) and 52-78 (TDVR…GGYG). Over residues 28–39 (PGGGRGVGDGLG) the composition is skewed to gly residues. Basic and acidic residues predominate over residues 67–76 (RHDDARHDGG). Helical transmembrane passes span 120-140 (WAIV…RVNM), 158-178 (VGLI…AGGI), 187-207 (TVLG…PFAA), 209-229 (LGLP…GVAM), 251-271 (LVYS…PLLI), 274-294 (FGWP…FSTW), 340-360 (VWAL…LLTW), 378-398 (LFCV…GWIA), 418-438 (IGFL…SPAM), 469-489 (AGVL…FGTA), and 503-523 (VFKV…LFST).

It belongs to the major facilitator superfamily. Sodium/anion cotransporter (TC 2.A.1.14) family.

The protein resides in the plastid. Its subcellular location is the chloroplast membrane. Functionally, probable anion transporter. The sequence is that of Probable anion transporter 1, chloroplastic (PHT4;1) from Oryza sativa subsp. japonica (Rice).